Here is a 756-residue protein sequence, read N- to C-terminus: Glutathione biosynthesis bifunctional protein GshAB (756 aa).

The interval 1-338 (MNYRELMQKK…TGDIFNEQVA (338 aa)) is glutamate--cysteine ligase. The 259-residue stretch at 493 to 751 (KKILSAAGFH…LTMDVLKLLY (259 aa)) folds into the ATP-grasp domain. 520–578 (LRYANKAFVVKPKSTNYGLGITIFKEGASLEDFTEALRIAFKEDTAVLIEEFLPGTEYR) is an ATP binding site. Residues Asp-700, Glu-721, and Asn-723 each coordinate Mg(2+). Positions 700, 721, and 723 each coordinate Mn(2+).

This sequence in the N-terminal section; belongs to the glutamate--cysteine ligase type 1 family. Type 2 subfamily. Monomer. Mg(2+) is required as a cofactor. It depends on Mn(2+) as a cofactor.

It catalyses the reaction L-cysteine + L-glutamate + ATP = gamma-L-glutamyl-L-cysteine + ADP + phosphate + H(+). The enzyme catalyses gamma-L-glutamyl-L-cysteine + glycine + ATP = glutathione + ADP + phosphate + H(+). The protein operates within sulfur metabolism; glutathione biosynthesis; glutathione from L-cysteine and L-glutamate: step 1/2. It functions in the pathway sulfur metabolism; glutathione biosynthesis; glutathione from L-cysteine and L-glutamate: step 2/2. Its function is as follows. Synthesizes glutathione from L-glutamate and L-cysteine via gamma-L-glutamyl-L-cysteine. This Enterococcus faecalis (strain ATCC 700802 / V583) protein is Glutathione biosynthesis bifunctional protein GshAB.